The following is an 84-amino-acid chain: Gomesin (84 aa).

The signal sequence occupies residues 1-23 (MNRTRLFACLLLAVLILVHESNA). Gln24 carries the post-translational modification Pyrrolidone carboxylic acid. 2 disulfides stabilise this stretch: Cys25-Cys38 and Cys29-Cys34. Arg41 carries the arginine amide modification. Residues 42–84 (GKRSLDETNVGTSDVEKRAFDDSNVPSLVEERELEDEGSFIFD) constitute a propeptide that is removed on maturation.

In terms of tissue distribution, in hemocytes only, but not in all hemocytes observed.

Its subcellular location is the secreted. Functionally, active against several Gram-positive bacteria such as Bacillus spp, Staphylococcus spp and E.faecalis, several Gram-negative bacteria such as E.coli, K.pneumoniae, P.aeruginosa and Salmonella spp, filamentous fungi such as N.crassa, T.viridae and yeasts such as C.albicans. It is active against the parasite L.amazonensis as well. It shows hemolytic activity. The chain is Gomesin from Acanthoscurria gomesiana (Tarantula spider).